The chain runs to 229 residues: Peptidase E (229 aa).

Catalysis depends on charge relay system residues serine 120, aspartate 135, and histidine 157.

This sequence belongs to the peptidase S51 family.

The protein resides in the cytoplasm. The catalysed reaction is Dipeptidase E catalyzes the hydrolysis of dipeptides Asp-|-Xaa. It does not act on peptides with N-terminal Glu, Asn or Gln, nor does it cleave isoaspartyl peptides.. Its function is as follows. Hydrolyzes dipeptides containing N-terminal aspartate residues. May play a role in allowing the cell to use peptide aspartate to spare carbon otherwise required for the synthesis of the aspartate family of amino acids. This Citrobacter koseri (strain ATCC BAA-895 / CDC 4225-83 / SGSC4696) protein is Peptidase E.